Here is a 155-residue protein sequence, read N- to C-terminus: Small ribosomal subunit protein uS7 (155 aa).

This sequence belongs to the universal ribosomal protein uS7 family. In terms of assembly, part of the 30S ribosomal subunit. Contacts proteins S9 and S11.

Functionally, one of the primary rRNA binding proteins, it binds directly to 16S rRNA where it nucleates assembly of the head domain of the 30S subunit. Is located at the subunit interface close to the decoding center, probably blocks exit of the E-site tRNA. The protein is Small ribosomal subunit protein uS7 of Corynebacterium diphtheriae (strain ATCC 700971 / NCTC 13129 / Biotype gravis).